The following is a 457-amino-acid chain: MQKYTSEARQLLALAIPVILAQVAQTAMGFVDTVMAGGYSATDMAAVAIGTSIWLPAILFGHGLLLALTPVIAQLNGSGRRERIAHQVRQGFWLASFVSVLVMIVLWNAGYIIRSMHNIDPALADKAVGYLRALLWGAPGYLFFQVARNQCEGLAKTKPGMVMGFLGLLVNIPVNYIFIYGHFGMPELGGIGCGVATAAVYWVMFIAMLSYIKHARSMRDIRNEKSFGKPDSAVMKRLIQLGLPIALALFFEVTLFAVVALLVSPLGIVNVAGHQIALNFSSLMFVLPMSLAAAVTIRVGYRLGQGSTLDAQTAARTGLSVGVCMAVVTAIFTVTLRKHIALLYNDNPEVVSLAAQLMLLAAVYQISDSIQVIGSGILRGYKDTRSIFFITFTAYWVLGLPSGYILALTDLVVDRMGPAGFWMGFIIGLTSAAVLMMLRMRYLQRQPSSIILQRAAR.

12 helical membrane-spanning segments follow: residues 11–31, 53–73, 93–113, 127–147, 160–180, 188–208, 243–263, 276–296, 314–334, 357–377, 387–407, and 418–438; these read LLAL…MGFV, IWLP…PVIA, WLAS…GYII, AVGY…FQVA, GMVM…IFIY, LGGI…FIAM, LPIA…ALLV, IALN…AAVT, AART…IFTV, LMLL…GSGI, IFFI…YILA, and PAGF…LMML.

The protein belongs to the multi antimicrobial extrusion (MATE) (TC 2.A.66.1) family. MdtK subfamily.

It is found in the cell inner membrane. Its function is as follows. Multidrug efflux pump that functions probably as a Na(+)/drug antiporter. This is Multidrug resistance protein MdtK from Salmonella arizonae (strain ATCC BAA-731 / CDC346-86 / RSK2980).